Here is a 139-residue protein sequence, read N- to C-terminus: 3-hydroxyacyl-[acyl-carrier-protein] dehydratase FabZ (139 aa).

Residue H47 is part of the active site.

The protein belongs to the thioester dehydratase family. FabZ subfamily.

Its subcellular location is the cytoplasm. It carries out the reaction a (3R)-hydroxyacyl-[ACP] = a (2E)-enoyl-[ACP] + H2O. Its function is as follows. Involved in unsaturated fatty acids biosynthesis. Catalyzes the dehydration of short chain beta-hydroxyacyl-ACPs and long chain saturated and unsaturated beta-hydroxyacyl-ACPs. This Clostridium perfringens (strain ATCC 13124 / DSM 756 / JCM 1290 / NCIMB 6125 / NCTC 8237 / Type A) protein is 3-hydroxyacyl-[acyl-carrier-protein] dehydratase FabZ.